The sequence spans 193 residues: MENSLGSYEKELNLKATELRLGLPGSDEPEKRATARSNKRSSPEASDEESISNGSDVTKEDNVVPPAKAQVVGWPPIRSYRKNNVQQKKEEESEGNGMYVKVSMAGAPYLRKIDLKVYKSYPELLKALENMFKCIFGEYSEREGYNGSEYAPTYEDKDGDWMLVGDVPWNMFVSSCKRLRIMKGSEAKGLGCF.

A disordered region spans residues 16–68 (ATELRLGLPGSDEPEKRATARSNKRSSPEASDEESISNGSDVTKEDNVVPPAK). The EAR-like (transcriptional repression) motif lies at 19-23 (LRLGL). In terms of domain architecture, PB1 spans 97–184 (GMYVKVSMAG…SCKRLRIMKG (88 aa)).

The protein belongs to the Aux/IAA family. As to quaternary structure, homodimers and heterodimers.

Its subcellular location is the nucleus. Its function is as follows. Aux/IAA proteins are short-lived transcriptional factors that function as repressors of early auxin response genes at low auxin concentrations. Repression is thought to result from the interaction with auxin response factors (ARFs), proteins that bind to the auxin-responsive promoter element (AuxRE). Formation of heterodimers with ARF proteins may alter their ability to modulate early auxin response genes expression. This Vigna radiata var. radiata (Mung bean) protein is Auxin-induced protein 22D (AUX22D).